A 285-amino-acid polypeptide reads, in one-letter code: MTSRPALRRYAVIGNPITHSRSPQIHAMFAAQTGISLEYERIPAPLDGFRATAEAFFLAGGQGLNVTVPFKQEAFELAREHLSARARMAGAVNTLTWRDGVLQGCNTDGVGLVNDLIRLGVMLQGARLLLVGAGGAARGVLQPLAEAGCAEIRIVNRSPGRAAELLAAWTASGIPGGVQTSAGALDEAGGAWDIVINATASSLHDLAPALPGGLYAPGALAYDMVYGARPTPFMRQARADGAALTADGLGMLVGQAAESFFIWHGLRPDPTAVLTTLRANLLAED.

Residues 20–22 (SRS) and T67 contribute to the shikimate site. K71 (proton acceptor) is an active-site residue. N93 and D108 together coordinate shikimate. NADP(+)-binding positions include 132-136 (GAGGA) and M224. Y226 is a binding site for shikimate. G248 contacts NADP(+).

It belongs to the shikimate dehydrogenase family. In terms of assembly, homodimer.

It catalyses the reaction shikimate + NADP(+) = 3-dehydroshikimate + NADPH + H(+). Its pathway is metabolic intermediate biosynthesis; chorismate biosynthesis; chorismate from D-erythrose 4-phosphate and phosphoenolpyruvate: step 4/7. Its function is as follows. Involved in the biosynthesis of the chorismate, which leads to the biosynthesis of aromatic amino acids. Catalyzes the reversible NADPH linked reduction of 3-dehydroshikimate (DHSA) to yield shikimate (SA). The sequence is that of Shikimate dehydrogenase (NADP(+)) from Bordetella avium (strain 197N).